Here is a 1207-residue protein sequence, read N- to C-terminus: Histidine kinase 1 (1207 aa).

The segment covering 1 to 10 has biased composition (polar residues); the sequence is MRGDSFSMSI. The tract at residues 1 to 20 is disordered; it reads MRGDSFSMSIENLPDSPMGS. The Cytoplasmic segment spans residues 1 to 81; sequence MRGDSFSMSI…SSYYSVFVVR (81 aa). A helical membrane pass occupies residues 82–102; it reads LAIMVMLAILIGLLTVLTWHF. The Extracellular segment spans residues 103–446; the sequence is TRIYTKQSLQ…GKVDERAFKT (344 aa). Residues 447–467 traverse the membrane as a helical segment; that stretch reads LIILISASVCIFFIGCVCILI. At 468-1207 the chain is on the cytoplasmic side; sequence LTNGVSKEMK…PSAFQTSLSA (740 aa). Residues 505–763 form the Histidine kinase domain; sequence NMSHELRTPM…LMRLYLILST (259 aa). Phosphohistidine; by autocatalysis is present on His508. Disordered regions lie at residues 964-987 and 1000-1021; these read DTCS…VKPS and DATT…PEEE. Basic and acidic residues predominate over residues 975-984; the sequence is SGEKQVDKSV. The segment covering 1000–1014 has biased composition (low complexity); sequence DATTSNDDSTSASMT. Residues 1045-1196 form the Response regulatory domain; it reads RILLAEDTPV…LMVSTILSLT (152 aa). Asp1127 carries the 4-aspartylphosphate modification.

In terms of assembly, interacts with AHP2, depending of the phosphorylation state of Asp-1075 in the receiver domain, but probably not with AHP1 and AHP3. In terms of processing, autophosphorylated predominantly on His residues. Activation probably requires a transfer of a phosphate group between a His in the transmitter domain and an Asp of the receiver domain. In terms of tissue distribution, mostly expressed in roots, and, to a lower extent, in stems, leaves and flowers.

The protein localises to the cell membrane. It catalyses the reaction ATP + protein L-histidine = ADP + protein N-phospho-L-histidine.. In terms of biological role, functions as an osmosensor histidine kinase that detects water stress and transmits the stress signal to a downstream MAPK cascade. This protein undergoes an ATP-dependent autophosphorylation at a conserved histidine residue in the kinase core, and a phosphoryl group is then transferred to a conserved aspartate residue in the receiver domain. Positive regulator of drought and salt stress responses, and abscisic acid (ABA) signaling. Confers drought tolerance, probably by regulating levels of ABA accumulation. Plays a redundant role in regulating plant growth and development. Required for the regulation of desiccation processes during seed formation. The sequence is that of Histidine kinase 1 (AHK1) from Arabidopsis thaliana (Mouse-ear cress).